A 156-amino-acid polypeptide reads, in one-letter code: 6,7-dimethyl-8-ribityllumazine synthase (156 aa).

5-amino-6-(D-ribitylamino)uracil-binding positions include Phe22, 57–59, and 81–83; these read AVE and SVI. 86-87 is a (2S)-2-hydroxy-3-oxobutyl phosphate binding site; it reads GT. Residue His89 is the Proton donor of the active site. Phe114 lines the 5-amino-6-(D-ribitylamino)uracil pocket. (2S)-2-hydroxy-3-oxobutyl phosphate is bound at residue Arg128.

It belongs to the DMRL synthase family. In terms of assembly, forms an icosahedral capsid composed of 60 subunits, arranged as a dodecamer of pentamers.

It carries out the reaction (2S)-2-hydroxy-3-oxobutyl phosphate + 5-amino-6-(D-ribitylamino)uracil = 6,7-dimethyl-8-(1-D-ribityl)lumazine + phosphate + 2 H2O + H(+). Its pathway is cofactor biosynthesis; riboflavin biosynthesis; riboflavin from 2-hydroxy-3-oxobutyl phosphate and 5-amino-6-(D-ribitylamino)uracil: step 1/2. Functionally, catalyzes the formation of 6,7-dimethyl-8-ribityllumazine by condensation of 5-amino-6-(D-ribitylamino)uracil with 3,4-dihydroxy-2-butanone 4-phosphate. This is the penultimate step in the biosynthesis of riboflavin. The sequence is that of 6,7-dimethyl-8-ribityllumazine synthase from Aliivibrio salmonicida (strain LFI1238) (Vibrio salmonicida (strain LFI1238)).